The primary structure comprises 295 residues: 33 kDa chaperonin (295 aa).

Cystine bridges form between cysteine 237–cysteine 239 and cysteine 270–cysteine 273.

This sequence belongs to the HSP33 family. Under oxidizing conditions two disulfide bonds are formed involving the reactive cysteines. Under reducing conditions zinc is bound to the reactive cysteines and the protein is inactive.

It is found in the cytoplasm. Redox regulated molecular chaperone. Protects both thermally unfolding and oxidatively damaged proteins from irreversible aggregation. Plays an important role in the bacterial defense system toward oxidative stress. This chain is 33 kDa chaperonin, found in Symbiobacterium thermophilum (strain DSM 24528 / JCM 14929 / IAM 14863 / T).